Reading from the N-terminus, the 560-residue chain is Interferon alpha/beta receptor 1 (560 aa).

The N-terminal stretch at 1–24 (MLSLLGATTLMLVAGRWVLPAASG) is a signal peptide. The Extracellular portion of the chain corresponds to 25 to 437 (EANLKSENVE…EKTKPGNTSK (413 aa)). 2 N-linked (GlcNAc...) asparagine glycosylation sites follow: N47 and N55. A disulfide bridge links C76 with C84. Residues N85, N108, N109, and N172 are each glycosylated (N-linked (GlcNAc...) asparagine). Fibronectin type-III domains lie at 126–226 (QIGP…TTER), 231–329 (SPEN…TEVK), and 333–433 (FPPV…TKPG). An intrachain disulfide couples C199 to C220. N-linked (GlcNAc...) asparagine glycosylation is found at N222, N285, N313, N359, and N377. C283 and C291 form a disulfide bridge. A disulfide bond links C404 and C427. An N-linked (GlcNAc...) asparagine glycan is attached at N434. Residues 438–458 (TWLIAGICTALFSILVVIYVV) traverse the membrane as a helical segment. At 459–560 (RVFLRCVKYV…SEEFLQQDSV (102 aa)) the chain is on the cytoplasmic side. The S-palmitoyl cysteine moiety is linked to residue C464. Phosphotyrosine; by TYK2 is present on residues Y467 and Y482. The segment at 492–501 (LLSTSEEQTE) is important for interaction with TYK2. Residues S496 and S536 each carry the phosphoserine modification. Positions 524-560 (VHEEYNSQASQDSGNYSNEDENSGSKISEEFLQQDSV) are disordered. The span at 529-540 (NSQASQDSGNYS) shows a compositional bias: polar residues.

It belongs to the type II cytokine receptor family. As to quaternary structure, heterodimer with IFNAR2; forming the receptor for type I interferon. Interacts with TYK2. Interacts with STAT1 and STAT2; the interaction requires its phosphorylation at Tyr-482. Interacts (serine-phosphorylated form) with FBXW11, the substrate recognition component of a SCF (SKP1-CUL1-F-box protein) E3 ubiquitin-protein ligase complex. Interacts with SHMT2; this promotes interaction with ABRAXAS2 and the BRISC complex. Interacts with TRIM10; this interaction prevents association between IFNAR1 and TYK2. In terms of processing, ubiquitinated, leading to its internalization and degradation. Polyubiquitinated via 'Lys-48'-linked and 'Lys-63'-linked ubiquitin chains, leading to receptor internalization and lysosomal degradation. The 'Lys-63'-linked ubiquitin chains are cleaved off by the BRISC complex. Phosphorylated on tyrosine residues in response to interferon-binding: phosphorylation by TYK2 tyrosine kinase creates docking sites for STAT proteins. Phosphorylated on serine residues in response to interferon binding; this promotes interaction with FBXW11 and ubiquitination. Post-translationally, palmitoylation at Cys-464 is required for the activation of STAT1 and STAT2. In terms of tissue distribution, expressed in the endometrium. Expressed in all tissues examined except conceptus at day 15 of pregnancy.

The protein resides in the cell membrane. Its subcellular location is the late endosome. It is found in the lysosome. Together with IFNAR2, forms the heterodimeric receptor for type I interferons (including interferons alpha, beta, epsilon, omega and kappa). Type I interferon binding activates the JAK-STAT signaling cascade, resulting in transcriptional activation or repression of interferon-regulated genes that encode the effectors of the interferon response. Mechanistically, type I interferon-binding brings the IFNAR1 and IFNAR2 subunits into close proximity with one another, driving their associated Janus kinases (JAKs) (TYK2 bound to IFNAR1 and JAK1 bound to IFNAR2) to cross-phosphorylate one another. The activated kinases phosphorylate specific tyrosine residues on the intracellular domains of IFNAR1 and IFNAR2, forming docking sites for the STAT transcription factors. STAT proteins are then phosphorylated by the JAKs, promoting their translocation into the nucleus to regulate expression of interferon-regulated genes. Can also act independently of IFNAR2: form an active IFNB1 receptor by itself and activate a signaling cascade that does not involve activation of the JAK-STAT pathway. The polypeptide is Interferon alpha/beta receptor 1 (IFNAR1) (Ovis aries (Sheep)).